Here is a 78-residue protein sequence, read N- to C-terminus: Conotoxin CaFr179 (78 aa).

Positions 1 to 19 (MSGLGIMVLTLLLLVFMEA) are cleaved as a signal peptide. A propeptide spanning residues 20–44 (SHQDAGEKQATQRDAINVRRRRSLA) is cleaved from the precursor. Intrachain disulfides connect C52-C64, C56-C72, and C63-C76. F77 is modified (phenylalanine amide).

It belongs to the conotoxin O3 superfamily. In terms of tissue distribution, expressed by the venom duct.

Its subcellular location is the secreted. This chain is Conotoxin CaFr179, found in Conus caracteristicus (Characteristic cone).